A 326-amino-acid chain; its full sequence is MAFTPFPPRQPTASARLPLTLMTLDDWALATITGADSEKYMQGQVTADVSQMTEDQHLLAAHCDAKGKMWSNLRLFRDGDGFAWIERRSVREPQLTELKKYAVFSKVTIAPDDERVLLGVAGFQARAALANLFSELPSREKQVVKEGATTLLWFEHPAERFLIVTDEATANMLTDKLRGEAELNNSQQWLALNIEAGFPVIDAANSGQFIPQATNLQALGGISFKKGCYTGQEMVARAKFRGANKRALWLLKGSASRLPEAGEDLELKMGENWRRTGTVLATVKLEDGQVVVQVVMNNDMEPDSIFRVRDDANTLRIEPLPYSLEE.

W27 and W189 together coordinate folate.

The protein belongs to the tRNA-modifying YgfZ family.

It is found in the cytoplasm. Its function is as follows. Folate-binding protein involved in regulating the level of ATP-DnaA and in the modification of some tRNAs. It is probably a key factor in regulatory networks that act via tRNA modification, such as initiation of chromosomal replication. This is tRNA-modifying protein YgfZ from Escherichia coli O6:H1 (strain CFT073 / ATCC 700928 / UPEC).